We begin with the raw amino-acid sequence, 677 residues long: Methionine--tRNA ligase (677 aa).

Positions 14–24 match the 'HIGH' region motif; the sequence is PYANGAIHLGH. The Zn(2+) site is built by Cys-145, Cys-148, Cys-158, and Cys-161. The 'KMSKS' region signature appears at 330–334; sequence KMSKS. Lys-333 provides a ligand contact to ATP. One can recognise a tRNA-binding domain in the interval 576–677; that stretch reads DFAKVDLRVA…EGALPGMRVM (102 aa).

It belongs to the class-I aminoacyl-tRNA synthetase family. MetG type 1 subfamily. In terms of assembly, homodimer. Zn(2+) serves as cofactor.

It is found in the cytoplasm. It carries out the reaction tRNA(Met) + L-methionine + ATP = L-methionyl-tRNA(Met) + AMP + diphosphate. Is required not only for elongation of protein synthesis but also for the initiation of all mRNA translation through initiator tRNA(fMet) aminoacylation. The polypeptide is Methionine--tRNA ligase (Saccharophagus degradans (strain 2-40 / ATCC 43961 / DSM 17024)).